A 63-amino-acid polypeptide reads, in one-letter code: Conotoxin PnMRCL-0111 (63 aa).

Residues 1-19 (MRCLPVFIVLLLLIVSAPG) form the signal peptide. A propeptide spanning residues 20-49 (FDARPKTEDDVPLSSFHDDLQRTVRTLLDI) is cleaved from the precursor. Position 62 is a tryptophan amide (W62).

The protein belongs to the conotoxin T superfamily. Contains 2 disulfide bonds that can be either 'C1-C3, C2-C4' or 'C1-C4, C2-C3', since these disulfide connectivities have been observed for conotoxins with cysteine framework V (for examples, see AC P0DQQ7 and AC P81755). Expressed by the venom duct.

It localises to the secreted. This chain is Conotoxin PnMRCL-0111, found in Conus pennaceus (Feathered cone).